Consider the following 419-residue polypeptide: RING finger protein 150 (419 aa).

The first 34 residues, 1-34 (MALSVIQACRSLALSTWLLSFCFVHLLCLDFTVA), serve as a signal peptide directing secretion. Topologically, residues 35-197 (EKEEWYTAFV…NLQKYVSRTS (163 aa)) are extracellular. A PA domain is found at 70–172 (SLKREARGVL…PKGRELVLLM (103 aa)). The chain crosses the membrane as a helical span at residues 198-218 (VVFVSISFIILMIISLAWLVF). Residues 219–419 (YYIQRFRYAN…IDTPTDDPKC (201 aa)) lie on the Cytoplasmic side of the membrane. The RING-type; atypical zinc-finger motif lies at 267–308 (CAVCIEGYKPNDVVRILPCRHLFHKCCVDPWLVDHRTCPMCK). The tract at residues 374 to 419 (SEPLSQDTMPTEQSELQPIASGSSDVSLTTGAGHSDIDTPTDDPKC) is disordered. A compositionally biased stretch (polar residues) spans 376–405 (PLSQDTMPTEQSELQPIASGSSDVSLTTGA).

The protein localises to the membrane. This chain is RING finger protein 150 (rnf150), found in Danio rerio (Zebrafish).